A 133-amino-acid polypeptide reads, in one-letter code: Large ribosomal subunit protein bL20 (133 aa).

This sequence belongs to the bacterial ribosomal protein bL20 family.

Binds directly to 23S ribosomal RNA and is necessary for the in vitro assembly process of the 50S ribosomal subunit. It is not involved in the protein synthesizing functions of that subunit. The polypeptide is Large ribosomal subunit protein bL20 (Bartonella henselae (strain ATCC 49882 / DSM 28221 / CCUG 30454 / Houston 1) (Rochalimaea henselae)).